We begin with the raw amino-acid sequence, 141 residues long: Nucleoside diphosphate kinase (141 aa).

Residues lysine 11, phenylalanine 59, arginine 87, threonine 93, arginine 104, and asparagine 114 each contribute to the ATP site. The Pros-phosphohistidine intermediate role is filled by histidine 117.

Belongs to the NDK family. In terms of assembly, homotetramer. Mg(2+) serves as cofactor.

It is found in the cytoplasm. It carries out the reaction a 2'-deoxyribonucleoside 5'-diphosphate + ATP = a 2'-deoxyribonucleoside 5'-triphosphate + ADP. It catalyses the reaction a ribonucleoside 5'-diphosphate + ATP = a ribonucleoside 5'-triphosphate + ADP. Major role in the synthesis of nucleoside triphosphates other than ATP. The ATP gamma phosphate is transferred to the NDP beta phosphate via a ping-pong mechanism, using a phosphorylated active-site intermediate. This chain is Nucleoside diphosphate kinase, found in Burkholderia cenocepacia (strain HI2424).